We begin with the raw amino-acid sequence, 283 residues long: S-methyl-5'-thioadenosine phosphorylase (283 aa).

T18 provides a ligand contact to phosphate. Residue K51 is modified to N6-acetyllysine. Phosphate-binding positions include 60–61 (RH) and 93–94 (TA). M196 contributes to the substrate binding site. T197 is a phosphate binding site. A substrate-binding site is contributed by 220 to 222 (DYD).

This sequence belongs to the PNP/MTAP phosphorylase family. MTAP subfamily. As to quaternary structure, homotrimer.

The protein localises to the cytoplasm. It localises to the nucleus. It catalyses the reaction S-methyl-5'-thioadenosine + phosphate = 5-(methylsulfanyl)-alpha-D-ribose 1-phosphate + adenine. Its pathway is amino-acid biosynthesis; L-methionine biosynthesis via salvage pathway; S-methyl-5-thio-alpha-D-ribose 1-phosphate from S-methyl-5'-thioadenosine (phosphorylase route): step 1/1. In terms of biological role, catalyzes the reversible phosphorylation of S-methyl-5'-thioadenosine (MTA) to adenine and 5-methylthioribose-1-phosphate. Involved in the breakdown of MTA, a major by-product of polyamine biosynthesis. Responsible for the first step in the methionine salvage pathway after MTA has been generated from S-adenosylmethionine. Has broad substrate specificity with 6-aminopurine nucleosides as preferred substrates. The sequence is that of S-methyl-5'-thioadenosine phosphorylase from Bos taurus (Bovine).